The primary structure comprises 246 residues: UPF0309 protein ABC0887 (246 aa).

Positions 33 to 212 (MVHAIKEGKS…VLKMIEQLEE (180 aa)) constitute an SIS domain.

It belongs to the UPF0309 family.

The polypeptide is UPF0309 protein ABC0887 (Shouchella clausii (strain KSM-K16) (Alkalihalobacillus clausii)).